A 189-amino-acid chain; its full sequence is UPF0149 protein VSAL_I2539 (189 aa).

Belongs to the UPF0149 family.

The protein is UPF0149 protein VSAL_I2539 of Aliivibrio salmonicida (strain LFI1238) (Vibrio salmonicida (strain LFI1238)).